A 363-amino-acid polypeptide reads, in one-letter code: 3-isopropylmalate dehydrogenase (363 aa).

NAD(+) is bound at residue 78 to 89; the sequence is GPKWGTGAVRPE. Substrate is bound by residues arginine 96, arginine 106, arginine 135, and aspartate 224. Residues aspartate 224, aspartate 249, and aspartate 253 each coordinate Mg(2+). 288–299 lines the NAD(+) pocket; it reads GSAPDLPANKVN.

The protein belongs to the isocitrate and isopropylmalate dehydrogenases family. In terms of assembly, homodimer. Mg(2+) serves as cofactor. Requires Mn(2+) as cofactor.

The protein localises to the cytoplasm. It catalyses the reaction (2R,3S)-3-isopropylmalate + NAD(+) = 4-methyl-2-oxopentanoate + CO2 + NADH. Its pathway is amino-acid biosynthesis; L-leucine biosynthesis; L-leucine from 3-methyl-2-oxobutanoate: step 3/4. In terms of biological role, catalyzes the oxidation of 3-carboxy-2-hydroxy-4-methylpentanoate (3-isopropylmalate) to 3-carboxy-4-methyl-2-oxopentanoate. The product decarboxylates to 4-methyl-2 oxopentanoate. In Cyberlindnera jadinii (Torula yeast), this protein is 3-isopropylmalate dehydrogenase (LEU2).